The chain runs to 382 residues: Galactokinase (382 aa).

Residue 34–37 (EHTD) participates in substrate binding. 124–130 (GAGLSSS) contacts ATP. Mg(2+) contacts are provided by S130 and E162. The active-site Proton acceptor is D174. A substrate-binding site is contributed by Y223.

The protein belongs to the GHMP kinase family. GalK subfamily.

It localises to the cytoplasm. It carries out the reaction alpha-D-galactose + ATP = alpha-D-galactose 1-phosphate + ADP + H(+). The protein operates within carbohydrate metabolism; galactose metabolism. In terms of biological role, catalyzes the transfer of the gamma-phosphate of ATP to D-galactose to form alpha-D-galactose-1-phosphate (Gal-1-P). The sequence is that of Galactokinase from Shigella flexneri.